A 387-amino-acid polypeptide reads, in one-letter code: uncharacterized protein (387 aa).

The protein resides in the virion. This is an uncharacterized protein from Acanthamoeba polyphaga (Amoeba).